A 543-amino-acid chain; its full sequence is Chaperonin GroEL 2 (543 aa).

Residues 29–32 (TLGP), 86–90 (DGTTT), Gly-413, 479–481 (NAA), and Asp-495 contribute to the ATP site.

It belongs to the chaperonin (HSP60) family. As to quaternary structure, forms a cylinder of 14 subunits composed of two heptameric rings stacked back-to-back. Interacts with the co-chaperonin GroES.

The protein resides in the cytoplasm. It carries out the reaction ATP + H2O + a folded polypeptide = ADP + phosphate + an unfolded polypeptide.. In terms of biological role, together with its co-chaperonin GroES, plays an essential role in assisting protein folding. The GroEL-GroES system forms a nano-cage that allows encapsulation of the non-native substrate proteins and provides a physical environment optimized to promote and accelerate protein folding. The polypeptide is Chaperonin GroEL 2 (Synechococcus sp. (strain CC9311)).